Consider the following 131-residue polypeptide: Putative protein PTGES3L (131 aa).

The CS domain occupies 3-91; sequence RQPARTLWYD…KEKVAWPRLT (89 aa).

This sequence belongs to the p23/wos2 family.

The polypeptide is Putative protein PTGES3L (Ptges3l) (Mus musculus (Mouse)).